A 516-amino-acid chain; its full sequence is L-amino acid oxidase Lm29 (516 aa).

The signal sequence occupies residues 1-18 (MNVFFMFSLLFLAALGSC). Cysteines 28 and 191 form a disulfide. Residues 61 to 62 (MS), 81 to 82 (EA), Arg89, and 105 to 108 (GPMR) contribute to the FAD site. Position 108 (Arg108) interacts with substrate. An N-linked (GlcNAc...) asparagine glycan is attached at Asn190. His241 serves as a coordination point for substrate. Val279 lines the FAD pocket. Cys349 and Cys430 are disulfide-bonded. Asn379 is a glycosylation site (N-linked (GlcNAc...) asparagine). Residue Tyr390 participates in substrate binding. FAD is bound by residues Glu475 and 482–487 (GWIDST). 482 to 483 (GW) provides a ligand contact to substrate.

This sequence belongs to the flavin monoamine oxidase family. FIG1 subfamily. In terms of assembly, homodimer; non-covalently linked. FAD serves as cofactor. In terms of tissue distribution, expressed by the venom gland.

It localises to the secreted. It carries out the reaction an L-alpha-amino acid + O2 + H2O = a 2-oxocarboxylate + H2O2 + NH4(+). The catalysed reaction is L-leucine + O2 + H2O = 4-methyl-2-oxopentanoate + H2O2 + NH4(+). The enzyme catalyses L-phenylalanine + O2 + H2O = 3-phenylpyruvate + H2O2 + NH4(+). It catalyses the reaction L-tryptophan + O2 + H2O = indole-3-pyruvate + H2O2 + NH4(+). It carries out the reaction L-methionine + O2 + H2O = 4-methylsulfanyl-2-oxobutanoate + H2O2 + NH4(+). The catalysed reaction is L-isoleucine + O2 + H2O = (S)-3-methyl-2-oxopentanoate + H2O2 + NH4(+). The enzyme catalyses L-tyrosine + O2 + H2O = 3-(4-hydroxyphenyl)pyruvate + H2O2 + NH4(+). Functionally, catalyzes an oxidative deamination of predominantly hydrophobic and aromatic L-amino acids, thus producing hydrogen peroxide that may contribute to the diverse toxic effects of this enzyme. Is highly active on L-Met=L-Leu&gt;&gt;L-Phe&gt;L-Trp&gt;L-Tyr&gt;L-Ile, and weakly or not active on L-His, L-Arg, L-Val, L-Gln, L-Thr, L-Lys, and L-Ser. Exhibits a low myotoxicity (a mild myonecrosis is observed after injection in mice quadriceps muscle). In vitro, is cytotoxic to a lot of human cell lines, including AGS (IC(50)=22.7 ug/ml), MCF-7 (IC(50)=1.4 ug/ml), HL-60, HeLa and Jurkat cells, as well as to the parasite Leishmania brasiliensis (IC(50)=2.22 ug/ml). This cytotoxicity is dependent on the production of hydrogen peroxyde, since it is inhibited by catalase, a hydrogen peroxyde scavenger. In Lachesis muta (South American bushmaster), this protein is L-amino acid oxidase Lm29.